Consider the following 419-residue polypeptide: N-acylglucosamine 2-epimerase (419 aa).

The tract at residues 185 to 206 (LLNLVEQLGEEDEEMTDKYAEL) is leucine-zipper. A Phosphoserine modification is found at serine 418.

The protein belongs to the N-acylglucosamine 2-epimerase family. As to quaternary structure, homodimer. Forms a heterodimer with renin and inhibits its activity. As to expression, kidney, adrenal gland, brain, lung, spleen, ovary, testis and heart.

It carries out the reaction an N-acyl-D-glucosamine = an N-acyl-D-mannosamine. It participates in amino-sugar metabolism; N-acetylneuraminate degradation. Functionally, catalyzes the interconversion of N-acetylglucosamine to N-acetylmannosamine. Involved in the N-glycolylneuraminic acid (Neu5Gc) degradation pathway. This is N-acylglucosamine 2-epimerase (Renbp) from Rattus norvegicus (Rat).